The following is a 540-amino-acid chain: Phosphoenolpyruvate carboxykinase (ATP) (540 aa).

Arginine 65 is a binding site for substrate. Residue lysine 87 is modified to N6-acetyllysine. Positions 207 and 213 each coordinate substrate. Residues lysine 213, histidine 232, and 248 to 256 (GLSGTGKTT) each bind ATP. Residues lysine 213 and histidine 232 each coordinate Mn(2+). Mn(2+) is bound at residue aspartate 269. ATP is bound by residues glutamate 297, arginine 333, 449 to 450 (RI), and threonine 455. Arginine 333 provides a ligand contact to substrate. Position 523 is an N6-acetyllysine (lysine 523).

Belongs to the phosphoenolpyruvate carboxykinase (ATP) family. Monomer. The cofactor is Mn(2+).

It localises to the cytoplasm. It carries out the reaction oxaloacetate + ATP = phosphoenolpyruvate + ADP + CO2. Its pathway is carbohydrate biosynthesis; gluconeogenesis. In terms of biological role, involved in the gluconeogenesis. Catalyzes the conversion of oxaloacetate (OAA) to phosphoenolpyruvate (PEP) through direct phosphoryl transfer between the nucleoside triphosphate and OAA. The chain is Phosphoenolpyruvate carboxykinase (ATP) from Escherichia coli O6:K15:H31 (strain 536 / UPEC).